A 330-amino-acid polypeptide reads, in one-letter code: 4-hydroxythreonine-4-phosphate dehydrogenase (330 aa).

The substrate site is built by His-134 and Thr-135. Positions 163, 208, and 263 each coordinate a divalent metal cation. Positions 271, 280, and 289 each coordinate substrate.

It belongs to the PdxA family. Homodimer. Requires Zn(2+) as cofactor. Mg(2+) serves as cofactor. The cofactor is Co(2+).

It is found in the cytoplasm. The catalysed reaction is 4-(phosphooxy)-L-threonine + NAD(+) = 3-amino-2-oxopropyl phosphate + CO2 + NADH. It participates in cofactor biosynthesis; pyridoxine 5'-phosphate biosynthesis; pyridoxine 5'-phosphate from D-erythrose 4-phosphate: step 4/5. Catalyzes the NAD(P)-dependent oxidation of 4-(phosphooxy)-L-threonine (HTP) into 2-amino-3-oxo-4-(phosphooxy)butyric acid which spontaneously decarboxylates to form 3-amino-2-oxopropyl phosphate (AHAP). This is 4-hydroxythreonine-4-phosphate dehydrogenase from Methylococcus capsulatus (strain ATCC 33009 / NCIMB 11132 / Bath).